The primary structure comprises 309 residues: Homoserine kinase (309 aa).

Residue 91–101 participates in ATP binding; that stretch reads PIGSGLGSSAC.

It belongs to the GHMP kinase family. Homoserine kinase subfamily.

The protein localises to the cytoplasm. The enzyme catalyses L-homoserine + ATP = O-phospho-L-homoserine + ADP + H(+). Its pathway is amino-acid biosynthesis; L-threonine biosynthesis; L-threonine from L-aspartate: step 4/5. Catalyzes the ATP-dependent phosphorylation of L-homoserine to L-homoserine phosphate. This Salmonella dublin (strain CT_02021853) protein is Homoserine kinase.